The chain runs to 352 residues: UDP-3-O-acylglucosamine N-acyltransferase (352 aa).

The active-site Proton acceptor is histidine 246.

The protein belongs to the transferase hexapeptide repeat family. LpxD subfamily. Homotrimer.

It carries out the reaction a UDP-3-O-[(3R)-3-hydroxyacyl]-alpha-D-glucosamine + a (3R)-hydroxyacyl-[ACP] = a UDP-2-N,3-O-bis[(3R)-3-hydroxyacyl]-alpha-D-glucosamine + holo-[ACP] + H(+). It functions in the pathway bacterial outer membrane biogenesis; LPS lipid A biosynthesis. Its function is as follows. Catalyzes the N-acylation of UDP-3-O-acylglucosamine using 3-hydroxyacyl-ACP as the acyl donor. Is involved in the biosynthesis of lipid A, a phosphorylated glycolipid that anchors the lipopolysaccharide to the outer membrane of the cell. This chain is UDP-3-O-acylglucosamine N-acyltransferase, found in Chlorobium luteolum (strain DSM 273 / BCRC 81028 / 2530) (Pelodictyon luteolum).